The following is a 161-amino-acid chain: Ribonuclease P protein component (161 aa).

Residues 1-20 (MPDELRAEKSFPSKPYDSLK) are disordered.

This sequence belongs to the RnpA family. In terms of assembly, consists of a catalytic RNA component (M1 or rnpB) and a protein subunit.

It carries out the reaction Endonucleolytic cleavage of RNA, removing 5'-extranucleotides from tRNA precursor.. In terms of biological role, RNaseP catalyzes the removal of the 5'-leader sequence from pre-tRNA to produce the mature 5'-terminus. It can also cleave other RNA substrates such as 4.5S RNA. The protein component plays an auxiliary but essential role in vivo by binding to the 5'-leader sequence and broadening the substrate specificity of the ribozyme. The protein is Ribonuclease P protein component of Helicobacter pylori (strain P12).